The primary structure comprises 563 residues: NAD(P)H-quinone oxidoreductase chain 4 (563 aa).

Transmembrane regions (helical) follow at residues 25 to 45, 56 to 76, 90 to 110, 111 to 131, 133 to 153, 157 to 177, 189 to 209, 230 to 250, 264 to 284, 298 to 318, 335 to 355, 356 to 376, 397 to 417, 438 to 458, and 485 to 505; these read FPWL…VPFI, WFAL…YLYG, VSWL…ISMP, LILL…PVTF, PKLF…VFAV, LLFF…LAIW, FIIY…AMGF, GFQL…LPIV, TAPV…YALM, FAPL…LTSF, MGFV…GAML, QMIS…ATYD, FALW…SGFV, IVIA…LLSM, and VYII…PRLM.

This sequence belongs to the complex I subunit 4 family.

The protein localises to the cellular thylakoid membrane. It carries out the reaction a plastoquinone + NADH + (n+1) H(+)(in) = a plastoquinol + NAD(+) + n H(+)(out). It catalyses the reaction a plastoquinone + NADPH + (n+1) H(+)(in) = a plastoquinol + NADP(+) + n H(+)(out). In terms of biological role, NDH-1 shuttles electrons from NAD(P)H, via FMN and iron-sulfur (Fe-S) centers, to quinones in the respiratory chain. The immediate electron acceptor for the enzyme in this species is believed to be plastoquinone. Couples the redox reaction to proton translocation (for every two electrons transferred, four hydrogen ions are translocated across the cytoplasmic membrane), and thus conserves the redox energy in a proton gradient. The polypeptide is NAD(P)H-quinone oxidoreductase chain 4 (Prochlorococcus marinus (strain MIT 9313)).